The chain runs to 324 residues: Probable RuBisCO transcriptional regulator (324 aa).

An HTH lysR-type domain is found at 8–65; it reads FSLEQLRILKAIATEGSFKKAAESLYMTQPAISLQIQTLEKKLNIALFDRSGRRALMT. The H-T-H motif DNA-binding region spans 25–44; the sequence is FKKAAESLYMTQPAISLQIQ.

This sequence belongs to the LysR transcriptional regulatory family.

The protein resides in the plastid. It is found in the cyanelle. Its function is as follows. Trans-acting transcriptional regulator of RuBisCO genes (rbcL and rbcS) expression. This Cyanophora paradoxa protein is Probable RuBisCO transcriptional regulator (rbcR).